A 366-amino-acid polypeptide reads, in one-letter code: Chorismate synthase (366 aa).

R48 is a binding site for NADP(+). FMN-binding positions include 125 to 127 (RSS), 241 to 242 (NA), G285, 300 to 304 (KPTSS), and R326.

The protein belongs to the chorismate synthase family. In terms of assembly, homotetramer. FMNH2 serves as cofactor.

It catalyses the reaction 5-O-(1-carboxyvinyl)-3-phosphoshikimate = chorismate + phosphate. It participates in metabolic intermediate biosynthesis; chorismate biosynthesis; chorismate from D-erythrose 4-phosphate and phosphoenolpyruvate: step 7/7. Functionally, catalyzes the anti-1,4-elimination of the C-3 phosphate and the C-6 proR hydrogen from 5-enolpyruvylshikimate-3-phosphate (EPSP) to yield chorismate, which is the branch point compound that serves as the starting substrate for the three terminal pathways of aromatic amino acid biosynthesis. This reaction introduces a second double bond into the aromatic ring system. The polypeptide is Chorismate synthase (Ruegeria pomeroyi (strain ATCC 700808 / DSM 15171 / DSS-3) (Silicibacter pomeroyi)).